The following is a 495-amino-acid chain: GTPase Der (495 aa).

EngA-type G domains lie at 3–166 (PVIA…MDAE) and 208–381 (IKLA…DCST). GTP is bound by residues 9 to 16 (GRPNVGKS), 56 to 60 (DTGGI), 118 to 121 (NKTD), 214 to 221 (GRPNVGKS), 261 to 265 (DTAGV), and 326 to 329 (NKWD). The 85-residue stretch at 382 to 466 (KRVGTSLLTR…PIRIQFKEGE (85 aa)) folds into the KH-like domain.

Belongs to the TRAFAC class TrmE-Era-EngA-EngB-Septin-like GTPase superfamily. EngA (Der) GTPase family. Associates with the 50S ribosomal subunit.

Functionally, GTPase that plays an essential role in the late steps of ribosome biogenesis. The polypeptide is GTPase Der (Yersinia pseudotuberculosis serotype IB (strain PB1/+)).